The sequence spans 23 residues: SV40 early leader protein (23 aa).

The tract at residues 1-23 (MQRPRPPRPLSYSRSSEEAFLEA) is disordered.

Belongs to the polyomavirus early leader protein family.

May play a role in the lytic cycle. The protein is SV40 early leader protein of Macaca (macaques).